The primary structure comprises 261 residues: Lysosome-associated membrane glycoprotein 5 (261 aa).

Residues 1–29 (MDLQGRAVPSVDRLRVLLMLFHTMAQIMA) form the signal peptide. Residues 30–234 (EQEVENLSGL…AVDEREQLEE (205 aa)) are Extracellular-facing. Residues Asn-35, Asn-53, and Asn-126 are each glycosylated (N-linked (GlcNAc...) asparagine). Residues 235–255 (TLPLILGLILGLVIVVTLAIY) form a helical membrane-spanning segment. Residues 256 to 261 (HVHPQK) lie on the Cytoplasmic side of the membrane.

This sequence belongs to the LAMP family. Glycosylated.

It localises to the cytoplasmic vesicle membrane. Its subcellular location is the cell membrane. The protein localises to the cell projection. The protein resides in the dendrite. It is found in the cytoplasmic vesicle. It localises to the secretory vesicle. Its subcellular location is the synaptic vesicle membrane. The protein localises to the growth cone membrane. The protein resides in the early endosome membrane. It is found in the recycling endosome. It localises to the endoplasmic reticulum-Golgi intermediate compartment membrane. Its subcellular location is the endosome membrane. Functionally, plays a role in short-term synaptic plasticity in a subset of GABAergic neurons in the brain. The polypeptide is Lysosome-associated membrane glycoprotein 5 (LAMP5) (Pongo abelii (Sumatran orangutan)).